Consider the following 173-residue polypeptide: Translation initiation factor IF-3 (173 aa).

It belongs to the IF-3 family. Monomer.

The protein localises to the cytoplasm. Functionally, IF-3 binds to the 30S ribosomal subunit and shifts the equilibrium between 70S ribosomes and their 50S and 30S subunits in favor of the free subunits, thus enhancing the availability of 30S subunits on which protein synthesis initiation begins. In Clostridium tetani (strain Massachusetts / E88), this protein is Translation initiation factor IF-3.